The following is a 1013-amino-acid chain: Sodium/potassium-transporting ATPase subunit alpha-3 (1013 aa).

The interval 1–24 (MGDKKDDKDSPKKNKGKERRDLDD) is disordered. Residues 1-77 (MGDKKDDKDS…NALTPPPTTP (77 aa)) lie on the Cytoplasmic side of the membrane. A phosphoserine mark is found at Ser-37 and Ser-56. Residues 72 to 74 (PPP) are interaction with phosphoinositide-3 kinase. A helical transmembrane segment spans residues 78 to 98 (EWVKFCRQLFGGFSILLWIGA). The Extracellular portion of the chain corresponds to 99-121 (ILCFLAYGIQAGTEDDPSGDNLY). Residues 122–142 (LGIVLAAVVIITGCFSYYQEA) form a helical membrane-spanning segment. At 143 to 278 (KSSKIMESFK…VGKTPIAIEI (136 aa)) the chain is on the cytoplasmic side. Residues Ser-218 and Ser-265 each carry the phosphoserine modification. The chain crosses the membrane as a helical span at residues 279 to 298 (EHFIQLITGVAVFLGVSFFI). Topologically, residues 299-310 (LSLILGYTWLEA) are extracellular. Residues 311-328 (VIFLIGIIVANVPEGLLA) traverse the membrane as a helical segment. The Cytoplasmic segment spans residues 329 to 762 (TVTVCLTLTA…EEGRLIFDNL (434 aa)). The active-site 4-aspartylphosphate intermediate is Asp-366. Position 442 is a phosphoserine (Ser-442). At Tyr-548 the chain carries Phosphotyrosine. The Mg(2+) site is built by Asp-707 and Asp-711. A helical membrane pass occupies residues 763–782 (KKSIAYTLTSNIPEITPFLL). At 783–792 (FIMANIPLPL) the chain is on the extracellular side. The helical transmembrane segment at 793–813 (GTITILCIDLGTDMVPAISLA) threads the bilayer. Over 814–833 (YEAAESDIMKRQPRNPRTDK) the chain is Cytoplasmic. A helical membrane pass occupies residues 834–856 (LVNERLISMAYGQIGMIQALGGF). Topologically, residues 857–908 (FSYFVILAENGFLPGNLVGIRLNWDDRTVNDLEDSYGQQWTYEQRKVVEFTC) are extracellular. A helical membrane pass occupies residues 909–928 (HTAFFVSIVVVQWADLIICK). Over 929-941 (TRRNSVFQQGMKN) the chain is Cytoplasmic. Ser-933 bears the Phosphoserine; by PKA mark. Residues 942 to 960 (KILIFGLFEETALAAFLSY) form a helical membrane-spanning segment. Residues 961 to 975 (CPGMDVALRMYPLKP) lie on the Extracellular side of the membrane. A helical membrane pass occupies residues 976–996 (SWWFCAFPYSFLIFVYDEIRK). Over 997–1013 (LILRRNPGGWVEKETYY) the chain is Cytoplasmic.

The protein belongs to the cation transport ATPase (P-type) (TC 3.A.3) family. Type IIC subfamily. The sodium/potassium-transporting ATPase is composed of a catalytic alpha subunit, an auxiliary non-catalytic beta subunit and an additional regulatory subunit. Interacts with regulatory subunit FXYD1.

It localises to the cell membrane. It catalyses the reaction K(+)(out) + Na(+)(in) + ATP + H2O = K(+)(in) + Na(+)(out) + ADP + phosphate + H(+). Functionally, this is the catalytic component of the active enzyme, which catalyzes the hydrolysis of ATP coupled with the exchange of sodium and potassium ions across the plasma membrane. This action creates the electrochemical gradient of sodium and potassium ions, providing the energy for active transport of various nutrients. The protein is Sodium/potassium-transporting ATPase subunit alpha-3 (ATP1A3) of Homo sapiens (Human).